Reading from the N-terminus, the 82-residue chain is uncharacterized protein (82 aa).

3 consecutive transmembrane segments (helical) span residues 1–21, 22–42, and 62–82; these read MSASKILVGCWLGLAVLSVST, VLLGNAGATLALAAGVLLAAF, and WRLLLLGWPLLMAIGVLLTLL.

It is found in the cell membrane. This is an uncharacterized protein from Stutzerimonas stutzeri (Pseudomonas stutzeri).